A 192-amino-acid chain; its full sequence is Ion-translocating oxidoreductase complex subunit B (192 aa).

A hydrophobic region spans residues 1–26; sequence MNTIWIAVGALALLGLVFGAILGYAS. The 4Fe-4S domain maps to 32–91; it reads EDDPVVEKIDAILPQSQCGQCGYPGCRPYAEAVGLQGEKINRCAPGGEAVMLKIAELLNV. Residues cysteine 49, cysteine 52, cysteine 57, cysteine 74, cysteine 117, cysteine 120, cysteine 123, cysteine 127, cysteine 147, cysteine 150, cysteine 153, and cysteine 157 each contribute to the [4Fe-4S] cluster site. 4Fe-4S ferredoxin-type domains are found at residues 108–137 and 138–167; these read MLAV…GATR and AMHT…LRPV.

Belongs to the 4Fe4S bacterial-type ferredoxin family. RnfB subfamily. The complex is composed of six subunits: RsxA, RsxB, RsxC, RsxD, RsxE and RsxG. [4Fe-4S] cluster is required as a cofactor.

It is found in the cell inner membrane. Part of a membrane-bound complex that couples electron transfer with translocation of ions across the membrane. Required to maintain the reduced state of SoxR. The polypeptide is Ion-translocating oxidoreductase complex subunit B (Salmonella newport (strain SL254)).